The following is a 702-amino-acid chain: Ribosomal RNA large subunit methyltransferase K/L (702 aa).

The THUMP domain occupies 43–154; sequence LIYQSLMWSR…KETASIALDL (112 aa).

The protein belongs to the methyltransferase superfamily. RlmKL family.

The protein localises to the cytoplasm. It carries out the reaction guanosine(2445) in 23S rRNA + S-adenosyl-L-methionine = N(2)-methylguanosine(2445) in 23S rRNA + S-adenosyl-L-homocysteine + H(+). It catalyses the reaction guanosine(2069) in 23S rRNA + S-adenosyl-L-methionine = N(2)-methylguanosine(2069) in 23S rRNA + S-adenosyl-L-homocysteine + H(+). Functionally, specifically methylates the guanine in position 2445 (m2G2445) and the guanine in position 2069 (m7G2069) of 23S rRNA. The chain is Ribosomal RNA large subunit methyltransferase K/L from Salmonella agona (strain SL483).